The sequence spans 304 residues: Light-independent protochlorophyllide reductase iron-sulfur ATP-binding protein (304 aa).

Residues 46–51 and K75 each bind ATP; that span reads GIGKST. S50 is a binding site for Mg(2+). Residues C131 and C165 each coordinate [4Fe-4S] cluster. Residues 216-217 and 240-242 contribute to the ATP site; these read NR and PDL.

The protein belongs to the NifH/BchL/ChlL family. In terms of assembly, homodimer. Protochlorophyllide reductase is composed of three subunits; BchL, BchN and BchB. It depends on [4Fe-4S] cluster as a cofactor.

The catalysed reaction is chlorophyllide a + oxidized 2[4Fe-4S]-[ferredoxin] + 2 ADP + 2 phosphate = protochlorophyllide a + reduced 2[4Fe-4S]-[ferredoxin] + 2 ATP + 2 H2O. Its pathway is porphyrin-containing compound metabolism; bacteriochlorophyll biosynthesis (light-independent). In terms of biological role, component of the dark-operative protochlorophyllide reductase (DPOR) that uses Mg-ATP and reduced ferredoxin to reduce ring D of protochlorophyllide (Pchlide) to form chlorophyllide a (Chlide). This reaction is light-independent. The L component serves as a unique electron donor to the NB-component of the complex, and binds Mg-ATP. This Rhodobacter capsulatus (strain ATCC BAA-309 / NBRC 16581 / SB1003) protein is Light-independent protochlorophyllide reductase iron-sulfur ATP-binding protein.